Here is a 119-residue protein sequence, read N- to C-terminus: U-scoloptoxin(01)-Er1a (119 aa).

Residues 1 to 22 (MEIHSNIILLLLIALFAIFVKM) form the signal peptide. The Chitin-binding type-2 domain maps to 39 to 97 (NFACSGKKPGFYADEGFDCQVYHMCSPEGQLTTYLCGPGTIFNQKKLVCDLPTNYNCAD). Residues Cys-74 and Cys-87 are joined by a disulfide bond.

This sequence belongs to the scoloptoxin-01 family. Contains 3 disulfide bonds. As to expression, expressed by the venom gland.

It localises to the secreted. The protein is U-scoloptoxin(01)-Er1a of Ethmostigmus rubripes (Giant centipede).